A 1227-amino-acid chain; its full sequence is ATP-dependent helicase/nuclease subunit A (1227 aa).

Positions Val3–Ser477 constitute a UvrD-like helicase ATP-binding domain. Ala24 to Thr31 contacts ATP. In terms of domain architecture, UvrD-like helicase C-terminal spans Gly505 to Gly788.

The protein belongs to the helicase family. AddA subfamily. Heterodimer of AddA and AddB/RexB. It depends on Mg(2+) as a cofactor.

It catalyses the reaction Couples ATP hydrolysis with the unwinding of duplex DNA by translocating in the 3'-5' direction.. It carries out the reaction ATP + H2O = ADP + phosphate + H(+). The heterodimer acts as both an ATP-dependent DNA helicase and an ATP-dependent, dual-direction single-stranded exonuclease. Recognizes the chi site generating a DNA molecule suitable for the initiation of homologous recombination. The AddA nuclease domain is required for chi fragment generation; this subunit has the helicase and 3' -&gt; 5' nuclease activities. The protein is ATP-dependent helicase/nuclease subunit A of Lactobacillus delbrueckii subsp. bulgaricus (strain ATCC 11842 / DSM 20081 / BCRC 10696 / JCM 1002 / NBRC 13953 / NCIMB 11778 / NCTC 12712 / WDCM 00102 / Lb 14).